The chain runs to 145 residues: MPVFTKEALERLPIQLGNFFKKFPPENPNAWTTNPNRQNPFLATRNPQNGLVINPYYSNRRQAEIYKEARLQNLDNLLPQQMSWQKDSTRHILKGLLNPKGKISERKRDEILENRRLKLSESLKKTSKFKNERQKASKIAKPSPF.

Basic and acidic residues predominate over residues 123-135 (LKKTSKFKNERQK). The disordered stretch occupies residues 123-145 (LKKTSKFKNERQKASKIAKPSPF).

Belongs to the mitochondrion-specific ribosomal protein mL59 family. Component of the mitochondrial large ribosomal subunit (mt-LSU). Mature yeast 74S mitochondrial ribosomes consist of a small (37S) and a large (54S) subunit. The 37S small subunit contains a 15S ribosomal RNA (15S mt-rRNA) and at least 32 different proteins. The 54S large subunit contains a 21S rRNA (21S mt-rRNA) and at least 45 different proteins.

It localises to the mitochondrion. Functionally, component of the mitochondrial ribosome (mitoribosome), a dedicated translation machinery responsible for the synthesis of mitochondrial genome-encoded proteins, including at least some of the essential transmembrane subunits of the mitochondrial respiratory chain. The mitoribosomes are attached to the mitochondrial inner membrane and translation products are cotranslationally integrated into the membrane. The sequence is that of Large ribosomal subunit protein mL59 (mrpl25) from Schizosaccharomyces pombe (strain 972 / ATCC 24843) (Fission yeast).